The sequence spans 166 residues: Thiol peroxidase (166 aa).

Residues 18 to 166 (LKVGDKAPDV…NYEALLKVLK (149 aa)) enclose the Thioredoxin domain. Residue cysteine 60 is the Cysteine sulfenic acid (-SOH) intermediate of the active site. A disulfide bridge links cysteine 60 with cysteine 94.

The protein belongs to the peroxiredoxin family. Tpx subfamily. Homodimer.

The enzyme catalyses a hydroperoxide + [thioredoxin]-dithiol = an alcohol + [thioredoxin]-disulfide + H2O. Its function is as follows. Thiol-specific peroxidase that catalyzes the reduction of hydrogen peroxide and organic hydroperoxides to water and alcohols, respectively. Plays a role in cell protection against oxidative stress by detoxifying peroxides. This is Thiol peroxidase from Helicobacter pylori (strain J99 / ATCC 700824) (Campylobacter pylori J99).